We begin with the raw amino-acid sequence, 470 residues long: Protein escargot (470 aa).

The tract at residues 271–309 (LNLNTSQPGEQAAAKTGDMSPETMPNASAKKDKNQPPRY) is disordered. C2H2-type zinc fingers lie at residues 309-331 (YQCP…QQFH), 344-366 (FSCK…IRTH), 370-392 (CKCN…IRTH), and 398-420 (FSCQ…LQTH). A C2H2-type 5; atypical zinc finger spans residues 426 to 449 (YSCTSCSKTFSRMSLLTKHSEGGC). The disordered stretch occupies residues 448 to 470 (GCPGGSAGSSSSSELNYAGYAEP).

Belongs to the snail C2H2-type zinc-finger protein family. Expression is complex and dynamic. In early embryogenesis, expression begins on the dorsal side of the embryo. Expressed in a pattern of longitudinal stripes early in germband elongation. Later in embryogenesis, expression is in cells that correspond to the wing, haltere, leg and genital imaginal disks and the abdominal histoblasts. In the embryonic leg disk, expression is restricted to imaginal cells. Also expressed in the central nervous system (CNS), tracheae and head of stage 14 embryos. CNS and tracheal expression decays during later stages, though head expression persists until late in embryogenesis. In third instar larvae, expression is seen in the brain and in regions of many imaginal tissues including the eye-antennal, wing, leg and haltere disks. Expressed in embryonic, larval and adult male germline stem cells and in the somatic cells of the embryonic gonads.

It is found in the nucleus. Functionally, transcription factor that can both stimulate and repress transcription. Binds to the consensus DNA sequence 5'-A/GCAGGTG-3'. Regulates cell motility and adhesion during tracheal morphogenesis by stimulating transcription of the DE-cadherin gene shg at branch tips, thereby promoting tracheal tube fusion. Maintains diploidy in imaginal cells by inhibiting the transcription of genes required for endoreplication. Required for development of the genital disk and acts as an intrinsic determinant of wing cell fate. The somatic protein is required for maintenance of male germ cells. Acts with other members of the snail protein family to control embryonic central nervous system development. In Drosophila melanogaster (Fruit fly), this protein is Protein escargot (esg).